Here is a 401-residue protein sequence, read N- to C-terminus: Argininosuccinate synthase (401 aa).

A8 to S16 provides a ligand contact to ATP. Y85 lines the L-citrulline pocket. Position 115 (G115) interacts with ATP. Positions 117, 121, and 122 each coordinate L-aspartate. N121 contributes to the L-citrulline binding site. Residues R125, S173, E258, and Y270 each coordinate L-citrulline.

The protein belongs to the argininosuccinate synthase family. Type 1 subfamily. As to quaternary structure, homotetramer.

It is found in the cytoplasm. The catalysed reaction is L-citrulline + L-aspartate + ATP = 2-(N(omega)-L-arginino)succinate + AMP + diphosphate + H(+). It participates in amino-acid biosynthesis; L-arginine biosynthesis; L-arginine from L-ornithine and carbamoyl phosphate: step 2/3. In Staphylococcus carnosus (strain TM300), this protein is Argininosuccinate synthase.